A 149-amino-acid polypeptide reads, in one-letter code: Large ribosomal subunit protein bL9 (149 aa).

It belongs to the bacterial ribosomal protein bL9 family.

Functionally, binds to the 23S rRNA. In Buchnera aphidicola subsp. Cinara cedri (strain Cc), this protein is Large ribosomal subunit protein bL9.